A 400-amino-acid chain; its full sequence is Probable glycosyltransferase WbjE (400 aa).

It belongs to the glycosyltransferase group 1 family. Glycosyltransferase 4 subfamily.

It participates in bacterial outer membrane biogenesis; LPS O-antigen biosynthesis. The protein is Probable glycosyltransferase WbjE (wbjE) of Pseudomonas aeruginosa.